The primary structure comprises 126 residues: Alpha-lactalbumin (126 aa).

The 126-residue stretch at Lys-1 to Cys-126 folds into the C-type lysozyme domain. 4 cysteine pairs are disulfide-bonded: Cys-6/Cys-126, Cys-30/Cys-117, Cys-63/Cys-82, and Cys-78/Cys-96. Asn-47 carries an N-linked (GlcNAc...) asparagine glycan. Positions 84, 87, 89, 92, and 93 each coordinate Ca(2+).

This sequence belongs to the glycosyl hydrolase 22 family. As to quaternary structure, lactose synthase (LS) is a heterodimer of a catalytic component, beta1,4-galactosyltransferase (beta4Gal-T1) and a regulatory component, alpha-lactalbumin (LA). In terms of tissue distribution, mammary gland specific. Secreted in milk.

It localises to the secreted. Functionally, regulatory subunit of lactose synthase, changes the substrate specificity of galactosyltransferase in the mammary gland making glucose a good acceptor substrate for this enzyme. This enables LS to synthesize lactose, the major carbohydrate component of milk. In other tissues, galactosyltransferase transfers galactose onto the N-acetylglucosamine of the oligosaccharide chains in glycoproteins. This Tachyglossus aculeatus aculeatus (Southeast Australian short-beaked echidna) protein is Alpha-lactalbumin (LALBA).